The primary structure comprises 232 residues: MAKIAKRVQKSREGIDPAKVYGLTEAVTLVKERATAKFDETIEVAMNLGVDPRHADQMVRGVVNLPNGTGRSVRVAVFARGAKADEAKAAGADVVGAEDLVEIVQGGKIDFDRCIATPDMMPLVGRLGKVLGPRGMMPNPKVGTVTMDVTAAVKSSKGGAVEFRVEKAGIVHAGVGKASFDAKALEENIRAFADAVIKAKPTGAKGNYVKRVAISSTMGPGLKIDPATLSVA.

Belongs to the universal ribosomal protein uL1 family. In terms of assembly, part of the 50S ribosomal subunit.

Functionally, binds directly to 23S rRNA. The L1 stalk is quite mobile in the ribosome, and is involved in E site tRNA release. Protein L1 is also a translational repressor protein, it controls the translation of the L11 operon by binding to its mRNA. The protein is Large ribosomal subunit protein uL1 of Sinorhizobium fredii (strain NBRC 101917 / NGR234).